The sequence spans 218 residues: 3,4-dihydroxy-2-butanone 4-phosphate synthase (218 aa).

D-ribulose 5-phosphate is bound by residues 38–39 (RE), aspartate 43, 151–155 (RRGHT), and glutamate 175. Mg(2+) is bound at residue glutamate 39. Residue histidine 154 participates in Mg(2+) binding.

This sequence belongs to the DHBP synthase family. In terms of assembly, homodimer. The cofactor is Mg(2+). Mn(2+) serves as cofactor.

The catalysed reaction is D-ribulose 5-phosphate = (2S)-2-hydroxy-3-oxobutyl phosphate + formate + H(+). The protein operates within cofactor biosynthesis; riboflavin biosynthesis; 2-hydroxy-3-oxobutyl phosphate from D-ribulose 5-phosphate: step 1/1. In terms of biological role, catalyzes the conversion of D-ribulose 5-phosphate to formate and 3,4-dihydroxy-2-butanone 4-phosphate. This is 3,4-dihydroxy-2-butanone 4-phosphate synthase from Shewanella frigidimarina (strain NCIMB 400).